Consider the following 440-residue polypeptide: Exosome complex component RRP45 (440 aa).

Ser-65 is modified (phosphoserine). Position 297 is an N6-acetyllysine; alternate (Lys-297). Residue Lys-297 forms a Glycyl lysine isopeptide (Lys-Gly) (interchain with G-Cter in SUMO1); alternate linkage. Residue Lys-297 forms a Glycyl lysine isopeptide (Lys-Gly) (interchain with G-Cter in SUMO2); alternate linkage. Residues Ser-306 and Ser-346 each carry the phosphoserine modification. The interval 341 to 362 (EGIENSWGHLEDSEKEDEDEGG) is disordered. Residues 353 to 362 (SEKEDEDEGG) are compositionally biased toward acidic residues. Phosphoserine is present on residues Ser-393 and Ser-395. A disordered region spans residues 404–440 (EPDKNPKKIRTQTISATQVKAPSKKPVKKRKKKRAAN). Over residues 425–440 (PSKKPVKKRKKKRAAN) the composition is skewed to basic residues.

It belongs to the RNase PH family. Component of the RNA exosome core complex (Exo-9), composed of EXOSC1, EXOSC2, EXOSC3, EXOSC4, EXOSC5, EXOSC6, EXOSC7, EXOSC8 and EXOSC9; within the complex interacts with EXOSC3, EXOSC4, EXOSC5 and DIS3. The catalytically inactive RNA exosome core complex (Exo-9) associates with the catalytic subunit EXOSC10/RRP6. Exo-9 may associate with DIS3 to form the nucleolar exosome complex, or DIS3L to form the cytoplasmic exosome complex. Exo-9 is formed by a hexameric base ring consisting of the heterodimers EXOSC4-EXOSC9, EXOSC5-EXOSC8 and EXOSC6-EXOSC7, and a cap ring consisting of EXOSC1, EXOSC2 and EXOSC3. The RNA exosome complex associates with cofactors C1D/RRP47, MPHOSPH6/MPP6 and MTREX/MTR4. Interacts (via C-terminus region) with SETX (via N-terminus domain); the interaction enhances SETX sumoylation. Interacts with DIS3; the interaction is direct.

The protein localises to the cytoplasm. It localises to the nucleus. It is found in the nucleolus. The protein resides in the nucleoplasm. Non-catalytic component of the RNA exosome complex which has 3'-&gt;5' exoribonuclease activity and participates in a multitude of cellular RNA processing and degradation events. In the nucleus, the RNA exosome complex is involved in proper maturation of stable RNA species such as rRNA, snRNA and snoRNA, in the elimination of RNA processing by-products and non-coding 'pervasive' transcripts, such as antisense RNA species and promoter-upstream transcripts (PROMPTs), and of mRNAs with processing defects, thereby limiting or excluding their export to the cytoplasm. The RNA exosome may be involved in Ig class switch recombination (CSR) and/or Ig variable region somatic hypermutation (SHM) by targeting AICDA deamination activity to transcribed dsDNA substrates. In the cytoplasm, the RNA exosome complex is involved in general mRNA turnover and specifically degrades inherently unstable mRNAs containing AU-rich elements (AREs) within their 3' untranslated regions, and in RNA surveillance pathways, preventing translation of aberrant mRNAs. It seems to be involved in degradation of histone mRNA. The catalytic inactive RNA exosome core complex of 9 subunits (Exo-9) is proposed to play a pivotal role in the binding and presentation of RNA for ribonucleolysis, and to serve as a scaffold for the association with catalytic subunits and accessory proteins or complexes. EXOSC9 binds to ARE-containing RNAs. This is Exosome complex component RRP45 (EXOSC9) from Bos taurus (Bovine).